A 480-amino-acid chain; its full sequence is Ochratoxinase (480 aa).

The Zn(2+) site is built by H111, H113, K246, H287, and H307. Residue K246 is part of the active site. The active site involves D378.

This sequence belongs to the metallo-dependent hydrolases superfamily. Ochratoxinase amidase 2 family. As to quaternary structure, homooctamer. Zn(2+) serves as cofactor.

The protein localises to the secreted. The enzyme catalyses ochratoxin A + H2O = ochratoxin alpha + L-phenylalanine. Its activity is regulated as follows. The Zn(2+)-specific chelator 1,10-phenanthroline inhibits the enzyme activity. Functionally, carboxypeptidase that catalyzes the release of a C-terminal amino acid with specific catalytic activity for aromatic amino acids such as phenylalanine. Is able to degrade ochratoxin A, one of the five major mycotoxins most harmful to humans and animals that is produced by Aspergillus and Penicillium species and occurs in a wide range of agricultural products. The protein is Ochratoxinase of Aspergillus niger (strain ATCC 1015 / CBS 113.46 / FGSC A1144 / LSHB Ac4 / NCTC 3858a / NRRL 328 / USDA 3528.7).